A 264-amino-acid polypeptide reads, in one-letter code: MSAIHLPDTQNSADTRQIIIDKVGIKDITHPITYIDCDGNKIPTIGIFTMTVSLSERVKGTHMSRFIEILNEGPCEFSAHNFDKIIDKVRKRLESDIAHITLNFTFFRRKKAPSSGVESMMDYQVTLYGTLNKDEVQVMMKVVVPVTSLCPCSKSISKYGAHNQRSHITIKAKAAKDKTLHIEDLIDLAERKASCELYAILKRDDEKVVTERAYDNPAFVEDLVRDIAVDLNADDKISYYRLESENFESIHNHSAYALIENQKC.

Belongs to the GTP cyclohydrolase IV family.

The enzyme catalyses GTP + H2O = 7,8-dihydroneopterin 3'-triphosphate + formate + H(+). The protein operates within cofactor biosynthesis; 7,8-dihydroneopterin triphosphate biosynthesis; 7,8-dihydroneopterin triphosphate from GTP: step 1/1. Converts GTP to 7,8-dihydroneopterin triphosphate. This chain is GTP cyclohydrolase FolE2, found in Ruthia magnifica subsp. Calyptogena magnifica.